Consider the following 226-residue polypeptide: Cytidylate kinase (226 aa).

Residue 10 to 18 coordinates ATP; the sequence is GPASSGKST.

The protein belongs to the cytidylate kinase family. Type 1 subfamily.

It is found in the cytoplasm. It catalyses the reaction CMP + ATP = CDP + ADP. It carries out the reaction dCMP + ATP = dCDP + ADP. The protein is Cytidylate kinase of Streptococcus uberis (strain ATCC BAA-854 / 0140J).